Consider the following 116-residue polypeptide: Large ribosomal subunit protein bL19 (116 aa).

This sequence belongs to the bacterial ribosomal protein bL19 family.

In terms of biological role, this protein is located at the 30S-50S ribosomal subunit interface and may play a role in the structure and function of the aminoacyl-tRNA binding site. This chain is Large ribosomal subunit protein bL19, found in Pseudomonas fluorescens (strain Pf0-1).